We begin with the raw amino-acid sequence, 716 residues long: Fatty acid oxidation complex subunit alpha (716 aa).

The enoyl-CoA hydratase/isomerase stretch occupies residues 1–189 (MIYQSPTIQV…KVGAVDAVVA (189 aa)). Asp-296 contributes to the substrate binding site. The segment at 311–716 (KAVNSAAVLG…AANNGSYYQA (406 aa)) is 3-hydroxyacyl-CoA dehydrogenase. Residues Met-324, Asp-343, 400–402 (VVE), Lys-407, and Ser-429 contribute to the NAD(+) site. His-450 functions as the For 3-hydroxyacyl-CoA dehydrogenase activity in the catalytic mechanism. Residue Asn-453 participates in NAD(+) binding. The substrate site is built by Asn-500 and Tyr-660.

In the N-terminal section; belongs to the enoyl-CoA hydratase/isomerase family. The protein in the C-terminal section; belongs to the 3-hydroxyacyl-CoA dehydrogenase family. As to quaternary structure, heterotetramer of two alpha chains (FadB) and two beta chains (FadA).

It catalyses the reaction a (3S)-3-hydroxyacyl-CoA + NAD(+) = a 3-oxoacyl-CoA + NADH + H(+). The enzyme catalyses a (3S)-3-hydroxyacyl-CoA = a (2E)-enoyl-CoA + H2O. It carries out the reaction a 4-saturated-(3S)-3-hydroxyacyl-CoA = a (3E)-enoyl-CoA + H2O. The catalysed reaction is (3S)-3-hydroxybutanoyl-CoA = (3R)-3-hydroxybutanoyl-CoA. It catalyses the reaction a (3Z)-enoyl-CoA = a 4-saturated (2E)-enoyl-CoA. The enzyme catalyses a (3E)-enoyl-CoA = a 4-saturated (2E)-enoyl-CoA. The protein operates within lipid metabolism; fatty acid beta-oxidation. Its function is as follows. Involved in the aerobic and anaerobic degradation of long-chain fatty acids via beta-oxidation cycle. Catalyzes the formation of 3-oxoacyl-CoA from enoyl-CoA via L-3-hydroxyacyl-CoA. It can also use D-3-hydroxyacyl-CoA and cis-3-enoyl-CoA as substrate. This is Fatty acid oxidation complex subunit alpha from Shewanella oneidensis (strain ATCC 700550 / JCM 31522 / CIP 106686 / LMG 19005 / NCIMB 14063 / MR-1).